The primary structure comprises 526 residues: Delayed-rectifier potassium channel regulatory subunit KCNS1 (526 aa).

Residues 1–217 (MLMLLVRGTH…LTMENPGYSL (217 aa)) lie on the Cytoplasmic side of the membrane. The helical transmembrane segment at 218 to 239 (PSKLFSCVSISVVLASIAAMCI) threads the bilayer. The Extracellular portion of the chain corresponds to 240 to 270 (HSLPEYQAREAAAAVAAVAAGRSPEGVRDDP). Residues 271-293 (VLRRLEYFCIAWFSFEVSSRLLL) traverse the membrane as a helical segment. Residues 294 to 304 (APSTRNFFCHP) lie on the Cytoplasmic side of the membrane. Residues 305–322 (LNLIDIVSVLPFYLTLLA) form a helical membrane-spanning segment. At 323 to 337 (GVALGDQGGKEFGHL) the chain is on the extracellular side. Residues 338–358 (GKVVQVFRLMRIFRVLKLARH) traverse the membrane as a helical; Voltage-sensor segment. The Cytoplasmic segment spans residues 359–373 (STGLRSLGATLKHSY). The chain crosses the membrane as a helical span at residues 374-395 (REVGILLLYLAVGVSVFSGVAY). Residues 396 to 408 (TAEKEEDVGFNTI) lie on the Extracellular side of the membrane. The segment at residues 409-420 (PACWWWGTVSMT) is an intramembrane region (helical). The Selectivity filter signature appears at 421-426 (TVGYGD). The stretch at 421–428 (TVGYGDVV) is an intramembrane region. Over 429–435 (PVTVAGK) the chain is Extracellular. Residues 436 to 464 (LAASGCILGGILVVALPITIIFNKFSHFY) form a helical membrane-spanning segment. The Cytoplasmic segment spans residues 465 to 526 (RRQKALEAAV…PSEPPHPQMY (62 aa)). A disordered region spans residues 491–526 (GVSEASLETSRETSQEGRSADLESQAPSEPPHPQMY). The segment covering 499–511 (TSRETSQEGRSAD) has biased composition (basic and acidic residues).

The protein belongs to the potassium channel family. S (TC 1.A.1.2) subfamily. Kv9.1/KCNS1 sub-subfamily. As to quaternary structure, heterotetramer with KCNB1. Heterotetramer with KCNB2. Does not form homomultimers.

It is found in the cell membrane. Functionally, potassium channel regulatory subunit that modulate the delayed rectifier voltage-gated potassium channel activity of KCNB1 and KCNB2 by altering their kinetics, expression levels, and shifting the half-inactivation potential to more polarized values. While it does not form functional channels on its own, it can form functional heterotetrameric channels with KCNB1 and KCNB2. Each regulatory subunit has unique regulatory properties that can lead to extensive inhibition, significant changes in kinetics, and/or substantial shifts in the voltage dependencies of the inactivation process. In Pan troglodytes (Chimpanzee), this protein is Delayed-rectifier potassium channel regulatory subunit KCNS1.